Here is a 208-residue protein sequence, read N- to C-terminus: FMN-dependent NADH:quinone oxidoreductase (208 aa).

An FMN-binding site is contributed by 99–102 (MWNF).

The protein belongs to the azoreductase type 1 family. Homodimer. It depends on FMN as a cofactor.

It carries out the reaction 2 a quinone + NADH + H(+) = 2 a 1,4-benzosemiquinone + NAD(+). The catalysed reaction is N,N-dimethyl-1,4-phenylenediamine + anthranilate + 2 NAD(+) = 2-(4-dimethylaminophenyl)diazenylbenzoate + 2 NADH + 2 H(+). Quinone reductase that provides resistance to thiol-specific stress caused by electrophilic quinones. Its function is as follows. Also exhibits azoreductase activity. Catalyzes the reductive cleavage of the azo bond in aromatic azo compounds to the corresponding amines. The polypeptide is FMN-dependent NADH:quinone oxidoreductase (Brevibacillus brevis (strain 47 / JCM 6285 / NBRC 100599)).